The chain runs to 456 residues: Bifunctional protein GlmU (456 aa).

The tract at residues 1–231 (MERTCLAIIL…EEELTGCNTR (231 aa)) is pyrophosphorylase. UDP-N-acetyl-alpha-D-glucosamine-binding positions include 10-13 (LAAG), Lys-24, Gln-77, and 82-83 (GT). Residue Asp-107 participates in Mg(2+) binding. UDP-N-acetyl-alpha-D-glucosamine is bound by residues Gly-143, Glu-157, Asn-172, and Asn-229. A Mg(2+)-binding site is contributed by Asn-229. The interval 232-252 (AELAYIERLWQQRRRQELMLA) is linker. The interval 253–456 (GVSMVAPETV…AARKKVKAAE (204 aa)) is N-acetyltransferase. The UDP-N-acetyl-alpha-D-glucosamine site is built by Arg-318 and Lys-336. His-348 (proton acceptor) is an active-site residue. UDP-N-acetyl-alpha-D-glucosamine-binding residues include Tyr-351 and Asn-362. Acetyl-CoA contacts are provided by residues Ala-365, 371–372 (NY), Ser-390, Ser-408, and Arg-425.

It in the N-terminal section; belongs to the N-acetylglucosamine-1-phosphate uridyltransferase family. The protein in the C-terminal section; belongs to the transferase hexapeptide repeat family. As to quaternary structure, homotrimer. The cofactor is Mg(2+).

The protein resides in the cytoplasm. It catalyses the reaction alpha-D-glucosamine 1-phosphate + acetyl-CoA = N-acetyl-alpha-D-glucosamine 1-phosphate + CoA + H(+). It carries out the reaction N-acetyl-alpha-D-glucosamine 1-phosphate + UTP + H(+) = UDP-N-acetyl-alpha-D-glucosamine + diphosphate. It participates in nucleotide-sugar biosynthesis; UDP-N-acetyl-alpha-D-glucosamine biosynthesis; N-acetyl-alpha-D-glucosamine 1-phosphate from alpha-D-glucosamine 6-phosphate (route II): step 2/2. It functions in the pathway nucleotide-sugar biosynthesis; UDP-N-acetyl-alpha-D-glucosamine biosynthesis; UDP-N-acetyl-alpha-D-glucosamine from N-acetyl-alpha-D-glucosamine 1-phosphate: step 1/1. Its pathway is bacterial outer membrane biogenesis; LPS lipid A biosynthesis. In terms of biological role, catalyzes the last two sequential reactions in the de novo biosynthetic pathway for UDP-N-acetylglucosamine (UDP-GlcNAc). The C-terminal domain catalyzes the transfer of acetyl group from acetyl coenzyme A to glucosamine-1-phosphate (GlcN-1-P) to produce N-acetylglucosamine-1-phosphate (GlcNAc-1-P), which is converted into UDP-GlcNAc by the transfer of uridine 5-monophosphate (from uridine 5-triphosphate), a reaction catalyzed by the N-terminal domain. The polypeptide is Bifunctional protein GlmU (Sinorhizobium fredii (strain NBRC 101917 / NGR234)).